The primary structure comprises 299 residues: MKDLHNREIKSLRISITPQCNLNCFYCHKEGHNIDNNKLMTPTEIGEMVKYSLKYGINKIKISGGEPLLRNDLPEIIRNIKNLKNNQIKDISLTTNGILLEKYAQKLKDAGLDRVNVSLDTLDPELYKKITGGNVELVKRGIEKAVEAGLKPIKINFVVMSNTVGGLNDIMDYCRKMGVILQIIEFMPVDEKLKKYHYDINKIEEEISKKSDKTMVRKFMQNRKKYLVDGLEIEFVRPMDNTEFCSHCTRIRLTYDGLLKPCLLRDDNLVDVLTPLRNGEDINKCFIKCIDRRELYFKE.

One can recognise a Radical SAM core domain in the interval 4-229 (LHNREIKSLR…MQNRKKYLVD (226 aa)). R13 is a binding site for GTP. Residues C20 and C24 each contribute to the [4Fe-4S] cluster site. Y26 provides a ligand contact to S-adenosyl-L-methionine. Residue C27 coordinates [4Fe-4S] cluster. Position 61 (K61) interacts with GTP. G65 is an S-adenosyl-L-methionine binding site. T94 is a binding site for GTP. An S-adenosyl-L-methionine-binding site is contributed by S118. K154 lines the GTP pocket. Residues C245 and C248 each contribute to the [4Fe-4S] cluster site. Residue 250–252 (RIR) coordinates GTP. C262 serves as a coordination point for [4Fe-4S] cluster.

The protein belongs to the radical SAM superfamily. MoaA family. [4Fe-4S] cluster is required as a cofactor.

It carries out the reaction GTP + AH2 + S-adenosyl-L-methionine = (8S)-3',8-cyclo-7,8-dihydroguanosine 5'-triphosphate + 5'-deoxyadenosine + L-methionine + A + H(+). The protein operates within cofactor biosynthesis; molybdopterin biosynthesis. Its function is as follows. Catalyzes the cyclization of GTP to (8S)-3',8-cyclo-7,8-dihydroguanosine 5'-triphosphate. This is Probable GTP 3',8-cyclase from Methanococcus aeolicus (strain ATCC BAA-1280 / DSM 17508 / OCM 812 / Nankai-3).